The sequence spans 346 residues: Phenylalanine--tRNA ligase alpha subunit (346 aa).

Glutamate 261 is a binding site for Mg(2+).

Belongs to the class-II aminoacyl-tRNA synthetase family. Phe-tRNA synthetase alpha subunit type 1 subfamily. As to quaternary structure, tetramer of two alpha and two beta subunits. Requires Mg(2+) as cofactor.

The protein resides in the cytoplasm. It carries out the reaction tRNA(Phe) + L-phenylalanine + ATP = L-phenylalanyl-tRNA(Phe) + AMP + diphosphate + H(+). This is Phenylalanine--tRNA ligase alpha subunit from Streptococcus agalactiae serotype Ia (strain ATCC 27591 / A909 / CDC SS700).